A 632-amino-acid polypeptide reads, in one-letter code: Myrcene synthase TPS3FN, chloroplastic (632 aa).

Residues Met-1–Gln-55 constitute a chloroplast transit peptide. (2E)-geranyl diphosphate contacts are provided by Arg-343, Asp-380, Asp-384, Arg-524, and Asp-527. Mg(2+) contacts are provided by Asp-380 and Asp-384. The DDXXD motif motif lies at Asp-380–Asp-384. Positions 527, 531, and 535 each coordinate Mg(2+).

Belongs to the terpene synthase family. Tpsb subfamily. Requires Mg(2+) as cofactor. The cofactor is Mn(2+). Expressed in glandular trichomes two to four weeks after flowering onset.

The protein localises to the plastid. Its subcellular location is the chloroplast. It carries out the reaction (2E)-geranyl diphosphate = beta-myrcene + diphosphate. It functions in the pathway secondary metabolite biosynthesis; terpenoid biosynthesis. Functionally, involved in monoterpene (C10) olefins biosynthesis, constituants of cannabinoids and terpenoids-rich resins. Catalyzes strictly the conversion of (2E)-geranyl diphosphate to beta-myrcene. This is Myrcene synthase TPS3FN, chloroplastic from Cannabis sativa (Hemp).